Consider the following 110-residue polypeptide: Large ribosomal subunit protein uL22 (110 aa).

The protein belongs to the universal ribosomal protein uL22 family. Part of the 50S ribosomal subunit.

In terms of biological role, this protein binds specifically to 23S rRNA; its binding is stimulated by other ribosomal proteins, e.g. L4, L17, and L20. It is important during the early stages of 50S assembly. It makes multiple contacts with different domains of the 23S rRNA in the assembled 50S subunit and ribosome. The globular domain of the protein is located near the polypeptide exit tunnel on the outside of the subunit, while an extended beta-hairpin is found that lines the wall of the exit tunnel in the center of the 70S ribosome. This Salmonella arizonae (strain ATCC BAA-731 / CDC346-86 / RSK2980) protein is Large ribosomal subunit protein uL22.